The following is a 126-amino-acid chain: Urease subunit beta (126 aa).

Belongs to the urease beta subunit family. In terms of assembly, heterotrimer of UreA (gamma), UreB (beta) and UreC (alpha) subunits. Three heterotrimers associate to form the active enzyme.

It is found in the cytoplasm. It carries out the reaction urea + 2 H2O + H(+) = hydrogencarbonate + 2 NH4(+). It functions in the pathway nitrogen metabolism; urea degradation; CO(2) and NH(3) from urea (urease route): step 1/1. The chain is Urease subunit beta from Gloeothece citriformis (strain PCC 7424) (Cyanothece sp. (strain PCC 7424)).